Consider the following 825-residue polypeptide: Tuftelin-interacting protein 11 (825 aa).

The tract at residues 1–135 is disordered; the sequence is MSMSHLYGKD…RTFAGGIKSN (135 aa). Residues 11–25 show a composition bias toward acidic residues; sequence EDSDGVEMENFEITD. Composition is skewed to basic and acidic residues over residues 41–61 and 85–114; these read QTKEEATYGMWAERDSDDERP and PAAEEKSDSDSDSETQARRETFPKDFEAKK. Residues 122-135 are compositionally biased toward polar residues; the sequence is KPSQRTFAGGIKSN. One can recognise a G-patch domain in the interval 145-191; it reads TKGIGQKLLQKMGYVQGRGLGKNAQGIIAPIEAKQRKGKGAVGAYGS.

This sequence belongs to the TFP11/STIP family. As to quaternary structure, identified in the spliceosome C complex.

It localises to the nucleus. Involved in pre-mRNA splicing, specifically in spliceosome disassembly during late-stage splicing events. The protein is Tuftelin-interacting protein 11 (tfip11) of Xenopus tropicalis (Western clawed frog).